Here is a 204-residue protein sequence, read N- to C-terminus: Auxin-binding protein 4 (204 aa).

The first 41 residues, 1–41 (MVRRRPATGAAPRPHLAAVGRGLLLASVLAAAASSLPVAES), serve as a signal peptide directing secretion. Residues Cys43 and Cys196 are joined by a disulfide bond. Residues His98, His100, and Glu104 each coordinate Zn(2+). A glycan (N-linked (GlcNAc...) asparagine) is linked at Asn136. His147 contributes to the Zn(2+) binding site. The Prevents secretion from ER signature appears at 201–204 (KDEL).

In terms of assembly, homodimer.

The protein localises to the endoplasmic reticulum lumen. This is probably a receptor for the plant hormone auxin. This is Auxin-binding protein 4 (ABP4) from Zea mays (Maize).